The sequence spans 831 residues: DNA ligase (831 aa).

Residues 34-38 (DADYD), 83-84 (SL), and Glu-114 contribute to the NAD(+) site. Lys-116 functions as the N6-AMP-lysine intermediate in the catalytic mechanism. Residues Arg-137, Glu-174, Lys-291, and Lys-315 each contribute to the NAD(+) site. 4 residues coordinate Zn(2+): Cys-409, Cys-412, Cys-427, and Cys-433. The 83-residue stretch at 749-831 (AHTAPLNGQS…LAFLGQYSAQ (83 aa)) folds into the BRCT domain.

It belongs to the NAD-dependent DNA ligase family. LigA subfamily. Mg(2+) is required as a cofactor. Mn(2+) serves as cofactor.

It catalyses the reaction NAD(+) + (deoxyribonucleotide)n-3'-hydroxyl + 5'-phospho-(deoxyribonucleotide)m = (deoxyribonucleotide)n+m + AMP + beta-nicotinamide D-nucleotide.. Its function is as follows. DNA ligase that catalyzes the formation of phosphodiester linkages between 5'-phosphoryl and 3'-hydroxyl groups in double-stranded DNA using NAD as a coenzyme and as the energy source for the reaction. It is essential for DNA replication and repair of damaged DNA. The sequence is that of DNA ligase from Xylella fastidiosa (strain 9a5c).